A 301-amino-acid polypeptide reads, in one-letter code: Phosphatidylglycerol--prolipoprotein diacylglyceryl transferase (301 aa).

4 helical membrane-spanning segments follow: residues 10 to 30 (IAFS…LAGF), 57 to 77 (LLFY…MLFY), 92 to 112 (VWEG…AVAW), and 119 to 139 (MHMF…LGFG). Arg140 is an a 1,2-diacyl-sn-glycero-3-phospho-(1'-sn-glycerol) binding site. The next 3 membrane-spanning stretches (helical) occupy residues 202–222 (PSQL…LWLF), 230–250 (YAVS…VEFV), and 264–284 (LTRG…LFWL).

Belongs to the Lgt family.

It is found in the cell inner membrane. The enzyme catalyses L-cysteinyl-[prolipoprotein] + a 1,2-diacyl-sn-glycero-3-phospho-(1'-sn-glycerol) = an S-1,2-diacyl-sn-glyceryl-L-cysteinyl-[prolipoprotein] + sn-glycerol 1-phosphate + H(+). Its pathway is protein modification; lipoprotein biosynthesis (diacylglyceryl transfer). Its function is as follows. Catalyzes the transfer of the diacylglyceryl group from phosphatidylglycerol to the sulfhydryl group of the N-terminal cysteine of a prolipoprotein, the first step in the formation of mature lipoproteins. This Xylella fastidiosa (strain M23) protein is Phosphatidylglycerol--prolipoprotein diacylglyceryl transferase.